Consider the following 1077-residue polypeptide: Disheveled-associated activator of morphogenesis 1 (1077 aa).

Ser34 bears the Phosphoserine mark. The 376-residue stretch at 45 to 420 folds into the GBD/FH3 domain; sequence LPMPPVEELD…QIVIQNDKGQ (376 aa). The stretch at 437–526 forms a coiled coil; it reads RMLVNENEVK…ELNRRAVCAA (90 aa). 2 disordered regions span residues 457 to 478 and 526 to 596; these read KEHN…AKTQ and AVPG…PVSL. One can recognise an FH1 domain in the interval 528–599; the sequence is PGGPSPGAPG…PGAPVSLTLK (72 aa). 2 stretches are compositionally biased toward pro residues: residues 530–539 and 549–592; these read GPSPGAPGGP and LPPP…PPGA. Positions 600–1008 constitute an FH2 domain; the sequence is KKNIPQPTNA…EERRARLEAQ (409 aa). The interval 693–702 is actin-binding; that stretch reads QNCNILLSRL. The segment covering 1007-1026 has biased composition (basic and acidic residues); sequence AQLKEQRERERKVRKAKESS. 2 disordered regions span residues 1007–1033 and 1056–1077; these read AQLK…GEFD and RKRI…KLNF. Residues Ser1026 and Ser1029 each carry the phosphoserine modification. Residues 1026 to 1057 enclose the DAD domain; sequence SEESGEFDDLVSALRSGEVFDKDLSKLKRNRK. Residues 1066–1077 show a composition bias toward basic and acidic residues; sequence SSRERPITKLNF.

The protein belongs to the formin homology family. In terms of assembly, interacts with CIP4, FNBP1 and FNBP1L. Interacts with the SH3 domains of Abl, BTK, endophilin, spectrin and SRC. Binds specifically to GTP-bound CDC42 and RHOA. Interacts with INTU; INTU mediates the indirect interaction between DAAM1 and NPHP4. Interacts (via coiled coil domain) with KANK1 (via coiled coil domain). In terms of tissue distribution, in early embryogenesis, expressed in embryonic and extraembryonic ectoderm. In later stages of gastrulation, expressed also in somites and ribs and posterior vertebrae of developing skeletal system. During organogenesis, expressed in CNS, PNS, stomach, liver and limb bud.

It localises to the cytoplasm. It is found in the cytoskeleton. Its subcellular location is the cilium basal body. Functionally, binds to disheveled (Dvl) and Rho, and mediates Wnt-induced Dvl-Rho complex formation. May play a role as a scaffolding protein to recruit Rho-GDP and Rho-GEF, thereby enhancing Rho-GTP formation. Can direct nucleation and elongation of new actin filaments. Involved in building functional cilia. Involved in the organization of the subapical actin network in multiciliated epithelial cells. Together with DAAM2, required for myocardial maturation and sarcomere assembly. During cell division, may regulate RHOA activation that signals spindle orientation and chromosomal segregation. This is Disheveled-associated activator of morphogenesis 1 (Daam1) from Mus musculus (Mouse).